The chain runs to 120 residues: Prefoldin subunit beta (120 aa).

This sequence belongs to the prefoldin subunit beta family. In terms of assembly, heterohexamer of two alpha and four beta subunits.

The protein localises to the cytoplasm. In terms of biological role, molecular chaperone capable of stabilizing a range of proteins. Seems to fulfill an ATP-independent, HSP70-like function in archaeal de novo protein folding. This Methanopyrus kandleri (strain AV19 / DSM 6324 / JCM 9639 / NBRC 100938) protein is Prefoldin subunit beta (pfdB).